The chain runs to 285 residues: Nucleotide-binding protein PFL_0912 (285 aa).

Residue 8-15 coordinates ATP; the sequence is GRSGSGKS. 60–63 contacts GTP; that stretch reads DARN.

Belongs to the RapZ-like family.

Displays ATPase and GTPase activities. The sequence is that of Nucleotide-binding protein PFL_0912 from Pseudomonas fluorescens (strain ATCC BAA-477 / NRRL B-23932 / Pf-5).